The following is a 971-amino-acid chain: UPF0182 protein RER_22310 (971 aa).

Helical transmembrane passes span 16–36 (ILLV…RLIG), 61–81 (FVLF…AMLL), 112–132 (LFGV…AQAN), 172–192 (WLFV…YVFG), 209–229 (VQLA…YWFD), 257–277 (AKLI…ASIF), and 286–306 (MAVA…PMIV). Residues 890-927 (GSAATVTQPAPDPDTGAQPETPTTPTAPAPPASSDDVT) form a disordered region.

The protein belongs to the UPF0182 family.

It is found in the cell membrane. In Rhodococcus erythropolis (strain PR4 / NBRC 100887), this protein is UPF0182 protein RER_22310.